A 108-amino-acid polypeptide reads, in one-letter code: UPF0235 protein RPB_0109 (108 aa).

The protein belongs to the UPF0235 family.

The polypeptide is UPF0235 protein RPB_0109 (Rhodopseudomonas palustris (strain HaA2)).